A 451-amino-acid polypeptide reads, in one-letter code: DNA double-strand break repair protein Mre11 (451 aa).

Residues Asp8, His10, Asp49, and Asn84 each contribute to the Mn(2+) site. The active-site Proton donor is His85. Mn(2+) contacts are provided by His168, His198, and His200. The disordered stretch occupies residues 374–451; it reads REDNPPDLGD…GRPSLDRWIG (78 aa). Acidic residues predominate over residues 396–416; sequence GSEESSEEPEESDGEEVGLEV.

Belongs to the MRE11/RAD32 family. Homodimer. Forms a heterotetramer composed of two Mre11 subunits and two Rad50 subunits. Mn(2+) serves as cofactor.

Its activity is regulated as follows. Nuclease activity is regulated by Rad50. In terms of biological role, part of the Rad50/Mre11 complex, which is involved in the early steps of DNA double-strand break (DSB) repair. The complex may facilitate opening of the processed DNA ends to aid in the recruitment of HerA and NurA. Mre11 binds to DSB ends and has both double-stranded 3'-5' exonuclease activity and single-stranded endonuclease activity. The sequence is that of DNA double-strand break repair protein Mre11 from Methanopyrus kandleri (strain AV19 / DSM 6324 / JCM 9639 / NBRC 100938).